We begin with the raw amino-acid sequence, 231 residues long: Uracil phosphoribosyltransferase (231 aa).

Residue 38–42 (KGLVR) coordinates GTP. 5-phospho-alpha-D-ribose 1-diphosphate contacts are provided by residues Arg-87, Arg-112, and 140 to 148 (DPMIATGST). Uracil contacts are provided by residues Ile-203 and 208-210 (GDA). Asp-209 lines the 5-phospho-alpha-D-ribose 1-diphosphate pocket.

This sequence belongs to the UPRTase family. Mg(2+) serves as cofactor.

The enzyme catalyses UMP + diphosphate = 5-phospho-alpha-D-ribose 1-diphosphate + uracil. It participates in pyrimidine metabolism; UMP biosynthesis via salvage pathway; UMP from uracil: step 1/1. Its activity is regulated as follows. Allosterically activated by GTP. In terms of biological role, catalyzes the conversion of uracil and 5-phospho-alpha-D-ribose 1-diphosphate (PRPP) to UMP and diphosphate. The sequence is that of Uracil phosphoribosyltransferase from Methanococcus maripaludis (strain DSM 14266 / JCM 13030 / NBRC 101832 / S2 / LL).